The sequence spans 251 residues: Imidazole glycerol phosphate synthase subunit HisF (251 aa).

Active-site residues include Asp11 and Asp130.

The protein belongs to the HisA/HisF family. In terms of assembly, heterodimer of HisH and HisF.

Its subcellular location is the cytoplasm. It carries out the reaction 5-[(5-phospho-1-deoxy-D-ribulos-1-ylimino)methylamino]-1-(5-phospho-beta-D-ribosyl)imidazole-4-carboxamide + L-glutamine = D-erythro-1-(imidazol-4-yl)glycerol 3-phosphate + 5-amino-1-(5-phospho-beta-D-ribosyl)imidazole-4-carboxamide + L-glutamate + H(+). Its pathway is amino-acid biosynthesis; L-histidine biosynthesis; L-histidine from 5-phospho-alpha-D-ribose 1-diphosphate: step 5/9. IGPS catalyzes the conversion of PRFAR and glutamine to IGP, AICAR and glutamate. The HisF subunit catalyzes the cyclization activity that produces IGP and AICAR from PRFAR using the ammonia provided by the HisH subunit. The protein is Imidazole glycerol phosphate synthase subunit HisF of Bacteroides thetaiotaomicron (strain ATCC 29148 / DSM 2079 / JCM 5827 / CCUG 10774 / NCTC 10582 / VPI-5482 / E50).